The following is a 221-amino-acid chain: Small ribosomal subunit protein uS2 (221 aa).

Belongs to the universal ribosomal protein uS2 family.

The sequence is that of Small ribosomal subunit protein uS2 from Methanococcus maripaludis (strain C6 / ATCC BAA-1332).